A 97-amino-acid chain; its full sequence is Na(+)/H(+) antiporter subunit F1 (97 aa).

The next 3 membrane-spanning stretches (helical) occupy residues 3–23 (FKIFIITALIIVVLSMLAMLI), 35–55 (VVALDAIGLQLMAVIALFSIL), and 60–80 (YMLVVILMVGILAFLGTAVFS).

It belongs to the CPA3 antiporters (TC 2.A.63) subunit F family. As to quaternary structure, may form a heterooligomeric complex that consists of seven subunits: mnhA1, mnhB1, mnhC1, mnhD1, mnhE1, mnhF1 and mnhG1.

The protein resides in the cell membrane. Its function is as follows. Mnh complex is a Na(+)/H(+) antiporter involved in Na(+) excretion. The chain is Na(+)/H(+) antiporter subunit F1 (mnhF1) from Staphylococcus epidermidis (strain ATCC 35984 / DSM 28319 / BCRC 17069 / CCUG 31568 / BM 3577 / RP62A).